A 350-amino-acid chain; its full sequence is LysM domain-containing GPI-anchored protein 2 (350 aa).

Residues 1–23 (METSCFTLLGLLVSLSFFLTLSA) form the signal peptide. Asparagine 30, asparagine 48, asparagine 76, and asparagine 99 each carry an N-linked (GlcNAc...) asparagine glycan. 4 disulfides stabilise this stretch: cysteine 31-cysteine 97, cysteine 38-cysteine 161, cysteine 95-cysteine 159, and cysteine 97-cysteine 161. 2 LysM domains span residues 108–155 (IEYT…KFWI) and 172–216 (YAHV…PLDV). Residues 114 to 120 (KDDILSF) and 142 to 149 (PDPNKIEI) contribute to the chitin site. N-linked (GlcNAc...) asparagine glycans are attached at residues asparagine 193, asparagine 238, asparagine 258, asparagine 289, and asparagine 305. Cystine bridges form between cysteine 221-cysteine 253 and cysteine 248-cysteine 277. Aspartate 318 is lipidated: GPI-anchor amidated aspartate. Positions 319-350 (SAGPDNYASTLSSSFNFVIVLIQCALLCLCLL) are cleaved as a propeptide — removed in mature form.

As to quaternary structure, forms homooligomers. Interacts with CERK1. Binds to chitin oligosaccharide elicitor.

It is found in the cell membrane. Its function is as follows. Chitin elicitor-binding protein involved in the perception of chitin oligosaccharide elicitor. The protein is LysM domain-containing GPI-anchored protein 2 (LYM2) of Arabidopsis thaliana (Mouse-ear cress).